The following is a 1626-amino-acid chain: DNA topoisomerase 2-beta (1626 aa).

At A2 the chain carries N-acetylalanine. At K3 the chain carries N6-acetyllysine. Glycyl lysine isopeptide (Lys-Gly) (interchain with G-Cter in SUMO2) cross-links involve residues Q28, N29, K33, and K34. ATP contacts are provided by residues N112, N141, and 169–171 (SSN). Residues K177 and K178 each participate in a glycyl lysine isopeptide (Lys-Gly) (interchain with G-Cter in SUMO2) cross-link. 182-189 (GRNGYGAK) provides a ligand contact to ATP. Glycyl lysine isopeptide (Lys-Gly) (interchain with G-Cter in SUMO2) cross-links involve residues K228 and K299. The interval 363 to 365 (KKK) is interaction with DNA. Residues K367 and K373 each participate in a glycyl lysine isopeptide (Lys-Gly) (interchain with G-Cter in SUMO2) cross-link. ATP is bound at residue 397-399 (QTK). Glycyl lysine isopeptide (Lys-Gly) (interchain with G-Cter in SUMO2) cross-links involve residues K437, K439, and K446. One can recognise a Toprim domain in the interval 476-593 (CTLILTEGDS…SLLKHGFLEE (118 aa)). Positions 482, 562, and 564 each coordinate Mg(2+). Residues K600, K605, K635, K643, K646, K676, and K712 each participate in a glycyl lysine isopeptide (Lys-Gly) (interchain with G-Cter in SUMO2) cross-link. Positions 736–1189 (IPSLVDGFKP…SPSDLWKEDL (454 aa)) constitute a Topo IIA-type catalytic domain. The active-site O-(5'-phospho-DNA)-tyrosine intermediate is Y826. The interaction with DNA stretch occupies residues 1011-1020 (KLQTTLTCNS). The short motif at 1034–1044 (ETVQDILKEFF) is the Nuclear export signal element. A Glycyl lysine isopeptide (Lys-Gly) (interchain with G-Cter in SUMO2) cross-link involves residue K1092. Residues 1110–1140 (AWKEAQEKAAEEDETQNQHDDSSSDSGTPSG) form a disordered region. Residues K1214, K1217, K1226, and K1227 each participate in a glycyl lysine isopeptide (Lys-Gly) (interchain with G-Cter in SUMO2) cross-link. At S1236 the chain carries Phosphoserine. Residues K1250, K1262, and K1271 each participate in a glycyl lysine isopeptide (Lys-Gly) (interchain with G-Cter in SUMO2) cross-link. Residues 1274 to 1604 (FDEEFSGAPV…PSLPRTGRAR (331 aa)) are disordered. T1292 carries the post-translational modification Phosphothreonine. Glycyl lysine isopeptide (Lys-Gly) (interchain with G-Cter in SUMO2) cross-links involve residues K1323 and K1327. Composition is skewed to basic and acidic residues over residues 1334–1344 (PWSDDESKSES) and 1358–1370 (SLLRRAAAERPKY). 5 positions are modified to phosphoserine: S1336, S1340, S1342, S1344, and S1358. Position 1370 is a phosphotyrosine (Y1370). Residues 1374-1392 (FSEEEDDDADDDDDDNNDL) show a composition bias toward acidic residues. Residue S1375 is modified to Phosphoserine. K1398 is covalently cross-linked (Glycyl lysine isopeptide (Lys-Gly) (interchain with G-Cter in SUMO2)). Residue S1400 is modified to Phosphoserine. Phosphothreonine is present on T1403. The residue at position 1413 (S1413) is a Phosphoserine. The residue at position 1421 (Y1421) is a Phosphotyrosine. At S1424 the chain carries Phosphoserine. Residues 1430–1442 (ATPEKSLHDKKSQ) are compositionally biased toward basic and acidic residues. A Glycyl lysine isopeptide (Lys-Gly) (interchain with G-Cter in SUMO2) cross-link involves residue K1440. Phosphoserine is present on residues S1441, S1452, and S1454. K1456 is covalently cross-linked (Glycyl lysine isopeptide (Lys-Gly) (interchain with G-Cter in SUMO2)). The segment covering 1456 to 1466 (KSEDDSAKFDS) has biased composition (basic and acidic residues). A phosphoserine mark is found at S1461, S1466, S1473, and S1476. K1490 is covalently cross-linked (Glycyl lysine isopeptide (Lys-Gly) (interchain with G-Cter in SUMO2)). The segment at 1506–1512 (KPKRAPK) is interaction with PLSCR1. Residues S1522, S1524, and S1526 each carry the phosphoserine modification. Positions 1539 to 1549 (GKGRGAKKRKA) are enriched in basic residues. A phosphoserine mark is found at S1550 and S1552. A compositionally biased stretch (basic residues) spans 1563-1574 (KTSKTTSKKPKK). A Phosphothreonine modification is found at T1575. Phosphoserine is present on residues S1576 and S1581. Phosphothreonine is present on T1592. A Phosphoserine modification is found at S1596. Y1609 bears the Phosphotyrosine mark. Phosphoserine is present on S1613.

The protein belongs to the type II topoisomerase family. In terms of assembly, homodimer. Interacts with KIAA1210. Interacts with PLSCR1. Mg(2+) is required as a cofactor. It depends on Mn(2+) as a cofactor. The cofactor is Ca(2+). Post-translationally, (Microbial infection) Deubiquitinated by Epstein-Barr virus BPLF1; leading to stabilized SUMOylated TOP2A trapped in cleavage complexes, which halts the DNA damage response to TOP2A-induced double-strand DNA breaks. SUMOylated. As to expression, expressed in the tonsil, spleen, lymph node, thymus, skin, pancreas, testis, colon, kidney, liver, brain and lung. Also found in breast, colon and lung carcinomas, Hodgkin's disease, large-cell non-Hodgkin's lymphoma, lymphocytic lymphomas and seminomas.

It localises to the nucleus. Its subcellular location is the nucleolus. The protein localises to the nucleoplasm. It carries out the reaction ATP-dependent breakage, passage and rejoining of double-stranded DNA.. Functionally, key decatenating enzyme that alters DNA topology by binding to two double-stranded DNA molecules, generating a double-stranded break in one of the strands, passing the intact strand through the broken strand, and religating the broken strand. Plays a role in B-cell differentiation. The chain is DNA topoisomerase 2-beta (TOP2B) from Homo sapiens (Human).